The chain runs to 365 residues: Anhydro-N-acetylmuramic acid kinase (365 aa).

12–19 (GTSLDGID) provides a ligand contact to ATP.

Belongs to the anhydro-N-acetylmuramic acid kinase family.

It carries out the reaction 1,6-anhydro-N-acetyl-beta-muramate + ATP + H2O = N-acetyl-D-muramate 6-phosphate + ADP + H(+). The protein operates within amino-sugar metabolism; 1,6-anhydro-N-acetylmuramate degradation. It participates in cell wall biogenesis; peptidoglycan recycling. Functionally, catalyzes the specific phosphorylation of 1,6-anhydro-N-acetylmuramic acid (anhMurNAc) with the simultaneous cleavage of the 1,6-anhydro ring, generating MurNAc-6-P. Is required for the utilization of anhMurNAc either imported from the medium or derived from its own cell wall murein, and thus plays a role in cell wall recycling. The protein is Anhydro-N-acetylmuramic acid kinase of Rhizorhabdus wittichii (strain DSM 6014 / CCUG 31198 / JCM 15750 / NBRC 105917 / EY 4224 / RW1) (Sphingomonas wittichii).